The chain runs to 143 residues: Large ribosomal subunit protein uL11 (143 aa).

The protein belongs to the universal ribosomal protein uL11 family. As to quaternary structure, part of the ribosomal stalk of the 50S ribosomal subunit. Interacts with L10 and the large rRNA to form the base of the stalk. L10 forms an elongated spine to which L12 dimers bind in a sequential fashion forming a multimeric L10(L12)X complex. In terms of processing, one or more lysine residues are methylated.

In terms of biological role, forms part of the ribosomal stalk which helps the ribosome interact with GTP-bound translation factors. The sequence is that of Large ribosomal subunit protein uL11 from Delftia acidovorans (strain DSM 14801 / SPH-1).